Reading from the N-terminus, the 24-residue chain is Conotoxin PIVE (24 aa).

3 disulfides stabilise this stretch: cysteine 2–cysteine 10, cysteine 3–cysteine 15, and cysteine 13–cysteine 19. Lysine 24 carries the post-translational modification Lysine amide.

Belongs to the conotoxin A superfamily. Expressed by the venom duct.

It localises to the secreted. Probable neurotoxin with ion channel inhibitor activity. In vivo, elicits dose-dependently excitatory activity upon injection into fish. Its action is slowly reversible. The sequence is that of Conotoxin PIVE from Conus purpurascens (Purple cone).